The sequence spans 283 residues: Bifunctional protein FolD (283 aa).

NADP(+) is bound by residues 166-168 (GRS) and Ser-191.

Belongs to the tetrahydrofolate dehydrogenase/cyclohydrolase family. As to quaternary structure, homodimer.

It carries out the reaction (6R)-5,10-methylene-5,6,7,8-tetrahydrofolate + NADP(+) = (6R)-5,10-methenyltetrahydrofolate + NADPH. The catalysed reaction is (6R)-5,10-methenyltetrahydrofolate + H2O = (6R)-10-formyltetrahydrofolate + H(+). It functions in the pathway one-carbon metabolism; tetrahydrofolate interconversion. In terms of biological role, catalyzes the oxidation of 5,10-methylenetetrahydrofolate to 5,10-methenyltetrahydrofolate and then the hydrolysis of 5,10-methenyltetrahydrofolate to 10-formyltetrahydrofolate. The protein is Bifunctional protein FolD of Pediococcus pentosaceus (strain ATCC 25745 / CCUG 21536 / LMG 10740 / 183-1w).